The primary structure comprises 444 residues: Glutamate-1-semialdehyde 2,1-aminomutase (444 aa).

An N6-(pyridoxal phosphate)lysine modification is found at lysine 267.

It belongs to the class-III pyridoxal-phosphate-dependent aminotransferase family. HemL subfamily. In terms of assembly, homodimer. It depends on pyridoxal 5'-phosphate as a cofactor.

Its subcellular location is the cytoplasm. The enzyme catalyses (S)-4-amino-5-oxopentanoate = 5-aminolevulinate. It functions in the pathway porphyrin-containing compound metabolism; protoporphyrin-IX biosynthesis; 5-aminolevulinate from L-glutamyl-tRNA(Glu): step 2/2. This chain is Glutamate-1-semialdehyde 2,1-aminomutase, found in Xylella fastidiosa (strain Temecula1 / ATCC 700964).